A 393-amino-acid polypeptide reads, in one-letter code: Putative N(4)-(beta-N-acetylglucosaminyl)-L-asparaginase CG1827 (393 aa).

Positions 1–23 (MRRHLRASLWILCLATMAFSILA) are cleaved as a signal peptide. N-linked (GlcNAc...) asparagine glycans are attached at residues N49 and N64. Cystine bridges form between C97-C102 and C196-C212. The Nucleophile role is filled by T243. Substrate-binding positions include 271-274 (RVGD) and 294-297 (TGDG). Residues C354 and C381 are joined by a disulfide bond.

Belongs to the Ntn-hydrolase family. In terms of assembly, heterotetramer of two alpha and two beta chains arranged as a dimer of alpha/beta heterodimers. In terms of processing, cleaved into an alpha and beta chain by autocatalysis; this activates the enzyme. The N-terminal residue of the beta subunit is responsible for the nucleophile hydrolase activity.

It catalyses the reaction N(4)-(beta-N-acetyl-D-glucosaminyl)-L-asparagine + H2O = N-acetyl-beta-D-glucosaminylamine + L-aspartate + H(+). Functionally, cleaves the GlcNAc-Asn bond which joins oligosaccharides to the peptide of asparagine-linked glycoproteins. The polypeptide is Putative N(4)-(beta-N-acetylglucosaminyl)-L-asparaginase CG1827 (Drosophila melanogaster (Fruit fly)).